A 336-amino-acid chain; its full sequence is NADH-quinone oxidoreductase subunit H (336 aa).

Helical transmembrane passes span 4 to 24 (YILW…LVVA), 75 to 95 (YLFF…WAVI), 108 to 128 (LGLL…VIAG), 154 to 174 (MGFA…TGII), 181 to 201 (IWHW…IAGI), 233 to 253 (LFFL…SIMF), 272 to 292 (FVPG…MFLW), and 308 to 328 (LGWK…ACMV).

It belongs to the complex I subunit 1 family. In terms of assembly, NDH-1 is composed of 14 different subunits. Subunits NuoA, H, J, K, L, M, N constitute the membrane sector of the complex.

It localises to the cell inner membrane. The catalysed reaction is a quinone + NADH + 5 H(+)(in) = a quinol + NAD(+) + 4 H(+)(out). Functionally, NDH-1 shuttles electrons from NADH, via FMN and iron-sulfur (Fe-S) centers, to quinones in the respiratory chain. The immediate electron acceptor for the enzyme in this species is believed to be ubiquinone. Couples the redox reaction to proton translocation (for every two electrons transferred, four hydrogen ions are translocated across the cytoplasmic membrane), and thus conserves the redox energy in a proton gradient. This subunit may bind ubiquinone. In Francisella tularensis subsp. mediasiatica (strain FSC147), this protein is NADH-quinone oxidoreductase subunit H.